Here is a 284-residue protein sequence, read N- to C-terminus: Diaminopimelate epimerase (284 aa).

Positions 13 and 70 each coordinate substrate. Cys-79 functions as the Proton donor in the catalytic mechanism. Residues 80–81 (GN), Asn-167, Asn-200, and 218–219 (ER) each bind substrate. Cys-227 acts as the Proton acceptor in catalysis. Position 228–229 (228–229 (GT)) interacts with substrate.

This sequence belongs to the diaminopimelate epimerase family. Homodimer.

It is found in the cytoplasm. It catalyses the reaction (2S,6S)-2,6-diaminopimelate = meso-2,6-diaminopimelate. Its pathway is amino-acid biosynthesis; L-lysine biosynthesis via DAP pathway; DL-2,6-diaminopimelate from LL-2,6-diaminopimelate: step 1/1. In terms of biological role, catalyzes the stereoinversion of LL-2,6-diaminopimelate (L,L-DAP) to meso-diaminopimelate (meso-DAP), a precursor of L-lysine and an essential component of the bacterial peptidoglycan. The protein is Diaminopimelate epimerase of Prochlorococcus marinus (strain NATL1A).